Consider the following 170-residue polypeptide: Adenine phosphoribosyltransferase (170 aa).

Belongs to the purine/pyrimidine phosphoribosyltransferase family. Homodimer.

The protein resides in the cytoplasm. The enzyme catalyses AMP + diphosphate = 5-phospho-alpha-D-ribose 1-diphosphate + adenine. It participates in purine metabolism; AMP biosynthesis via salvage pathway; AMP from adenine: step 1/1. In terms of biological role, catalyzes a salvage reaction resulting in the formation of AMP, that is energically less costly than de novo synthesis. The polypeptide is Adenine phosphoribosyltransferase (Lactococcus lactis subsp. lactis (strain IL1403) (Streptococcus lactis)).